Reading from the N-terminus, the 270-residue chain is S-adenosylmethionine decarboxylase proenzyme (270 aa).

Ser120 (schiff-base intermediate with substrate; via pyruvic acid) is an active-site residue. Ser120 is modified (pyruvic acid (Ser); by autocatalysis). His125 serves as the catalytic Proton acceptor; for processing activity. The active-site Proton donor; for catalytic activity is Cys148.

The protein belongs to the prokaryotic AdoMetDC family. Type 2 subfamily. In terms of assembly, heterooctamer of four alpha and four beta chains arranged as a tetramer of alpha/beta heterodimers. Pyruvate is required as a cofactor. Post-translationally, is synthesized initially as an inactive proenzyme. Formation of the active enzyme involves a self-maturation process in which the active site pyruvoyl group is generated from an internal serine residue via an autocatalytic post-translational modification. Two non-identical subunits are generated from the proenzyme in this reaction, and the pyruvate is formed at the N-terminus of the alpha chain, which is derived from the carboxyl end of the proenzyme. The post-translation cleavage follows an unusual pathway, termed non-hydrolytic serinolysis, in which the side chain hydroxyl group of the serine supplies its oxygen atom to form the C-terminus of the beta chain, while the remainder of the serine residue undergoes an oxidative deamination to produce ammonia and the pyruvoyl group blocking the N-terminus of the alpha chain.

It catalyses the reaction S-adenosyl-L-methionine + H(+) = S-adenosyl 3-(methylsulfanyl)propylamine + CO2. It participates in amine and polyamine biosynthesis; S-adenosylmethioninamine biosynthesis; S-adenosylmethioninamine from S-adenosyl-L-methionine: step 1/1. Functionally, catalyzes the decarboxylation of S-adenosylmethionine to S-adenosylmethioninamine (dcAdoMet), the propylamine donor required for the synthesis of the polyamines spermine and spermidine from the diamine putrescine. The polypeptide is S-adenosylmethionine decarboxylase proenzyme (Alkaliphilus oremlandii (strain OhILAs) (Clostridium oremlandii (strain OhILAs))).